The primary structure comprises 131 residues: D-ribose pyranase (131 aa).

H20 (proton donor) is an active-site residue. Substrate contacts are provided by residues D28, H98, and 120-122 (YAN).

The protein belongs to the RbsD / FucU family. RbsD subfamily. Homodecamer.

The protein localises to the cytoplasm. It carries out the reaction beta-D-ribopyranose = beta-D-ribofuranose. The protein operates within carbohydrate metabolism; D-ribose degradation; D-ribose 5-phosphate from beta-D-ribopyranose: step 1/2. Catalyzes the interconversion of beta-pyran and beta-furan forms of D-ribose. This is D-ribose pyranase from Bacillus anthracis (strain A0248).